The primary structure comprises 275 residues: Fructose permease IID component (275 aa).

Positions 5 to 274 (KRLTKKEIFS…GILGYWAGFL (270 aa)) constitute a PTS EIID domain. The next 5 helical transmembrane spans lie at 100–120 (MKIGLMGPIAGVGDPIFWGTI), 127–147 (LGASLALGGNIAGPLLFFFLL), 187–207 (ILGLFVMGALVSKWTTINIPI), 227–247 (VLDSIMPGALPLGLTLLVAWM), and 255–275 (LLIICGIFVIGILGYWAGFLA).

It is found in the cell membrane. Functionally, the phosphoenolpyruvate-dependent sugar phosphotransferase system (PTS), a major carbohydrate active -transport system, catalyzes the phosphorylation of incoming sugar substrates concomitant with their translocation across the cell membrane. This system is involved in fructose transport. This is Fructose permease IID component (levG) from Bacillus subtilis (strain 168).